Here is a 319-residue protein sequence, read N- to C-terminus: ATP-dependent 6-phosphofructokinase (319 aa).

Gly-11 is a binding site for ATP. 21–25 (RAVVR) is a binding site for ADP. ATP contacts are provided by residues 72–73 (RC) and 102–105 (GDGS). Asp-103 contacts Mg(2+). 125–127 (TID) is a substrate binding site. Asp-127 acts as the Proton acceptor in catalysis. An ADP-binding site is contributed by Arg-154. Substrate-binding positions include Arg-162 and 169 to 171 (MGR). Residues 185-187 (GAE), Arg-211, and 213-215 (KKH) contribute to the ADP site. Residues Glu-222, Arg-243, and 249–252 (HVQR) contribute to the substrate site.

This sequence belongs to the phosphofructokinase type A (PFKA) family. ATP-dependent PFK group I subfamily. Prokaryotic clade 'B1' sub-subfamily. In terms of assembly, homotetramer. Mg(2+) is required as a cofactor.

It localises to the cytoplasm. The enzyme catalyses beta-D-fructose 6-phosphate + ATP = beta-D-fructose 1,6-bisphosphate + ADP + H(+). The protein operates within carbohydrate degradation; glycolysis; D-glyceraldehyde 3-phosphate and glycerone phosphate from D-glucose: step 3/4. With respect to regulation, allosterically activated by ADP and other diphosphonucleosides, and allosterically inhibited by phosphoenolpyruvate. Catalyzes the phosphorylation of D-fructose 6-phosphate to fructose 1,6-bisphosphate by ATP, the first committing step of glycolysis. This is ATP-dependent 6-phosphofructokinase from Bacillus cytotoxicus (strain DSM 22905 / CIP 110041 / 391-98 / NVH 391-98).